The primary structure comprises 246 residues: MAGHSKWANTRHRKAAQDAKRGKIFTKIIRELVTAAKLGGGDPDANPRLRAAVDKALSNNMTRDTLNRAIARGVGGDDDANMETIIYEGYGPGGTAIMIECLSDNRNRTVAEVRHAFSKCGGNLGTDGSVAYLFSKKGVISFEKGDEDTIMEAALEAGAEDVVTYDDGAIDVYTAWEEMGKVRDALEAAGLKADSAEVSMIPSTKADMDAETAPKLMRLIDMLEDCDDVQEVYHNGEISDEVAATL.

The disordered stretch occupies residues 1–20; sequence MAGHSKWANTRHRKAAQDAK.

This sequence belongs to the TACO1 family.

It is found in the cytoplasm. In Shigella flexneri, this protein is Probable transcriptional regulatory protein YebC.